A 782-amino-acid chain; its full sequence is Endonuclease MutS2 (782 aa).

336-343 contacts ATP; it reads GPNTGGKT. The region spanning 707–782 is the Smr domain; it reads LDLRGYRYED…GFGVTVATLK (76 aa).

This sequence belongs to the DNA mismatch repair MutS family. MutS2 subfamily. Homodimer. Binds to stalled ribosomes, contacting rRNA.

Endonuclease that is involved in the suppression of homologous recombination and thus may have a key role in the control of bacterial genetic diversity. In terms of biological role, acts as a ribosome collision sensor, splitting the ribosome into its 2 subunits. Detects stalled/collided 70S ribosomes which it binds and splits by an ATP-hydrolysis driven conformational change. Acts upstream of the ribosome quality control system (RQC), a ribosome-associated complex that mediates the extraction of incompletely synthesized nascent chains from stalled ribosomes and their subsequent degradation. Probably generates substrates for RQC. This chain is Endonuclease MutS2, found in Staphylococcus aureus (strain MRSA252).